The primary structure comprises 230 residues: Ribulose-phosphate 3-epimerase (230 aa).

Serine 10 serves as a coordination point for substrate. Histidine 35, aspartate 37, and histidine 68 together coordinate a divalent metal cation. The Proton acceptor role is filled by aspartate 37. Residues histidine 68, 146-149 (GFGG), 179-181 (DGG), and 201-202 (GS) contribute to the substrate site. Aspartate 179 is a binding site for a divalent metal cation. The Proton donor role is filled by aspartate 179.

The protein belongs to the ribulose-phosphate 3-epimerase family. As to quaternary structure, homohexamer. It depends on a divalent metal cation as a cofactor.

The catalysed reaction is D-ribulose 5-phosphate = D-xylulose 5-phosphate. It participates in carbohydrate degradation. In terms of biological role, catalyzes the reversible epimerization of D-ribulose 5-phosphate to D-xylulose 5-phosphate. The protein is Ribulose-phosphate 3-epimerase of Synechocystis sp. (strain ATCC 27184 / PCC 6803 / Kazusa).